The sequence spans 208 residues: Uridine kinase (208 aa).

11–18 (GGTGSGKS) lines the ATP pocket.

This sequence belongs to the uridine kinase family.

The protein resides in the cytoplasm. It catalyses the reaction uridine + ATP = UMP + ADP + H(+). It carries out the reaction cytidine + ATP = CMP + ADP + H(+). It functions in the pathway pyrimidine metabolism; CTP biosynthesis via salvage pathway; CTP from cytidine: step 1/3. It participates in pyrimidine metabolism; UMP biosynthesis via salvage pathway; UMP from uridine: step 1/1. This chain is Uridine kinase, found in Clostridium perfringens (strain ATCC 13124 / DSM 756 / JCM 1290 / NCIMB 6125 / NCTC 8237 / Type A).